Consider the following 108-residue polypeptide: Integration host factor subunit alpha (108 aa).

The protein belongs to the bacterial histone-like protein family. As to quaternary structure, heterodimer of an alpha and a beta chain.

Its function is as follows. This protein is one of the two subunits of integration host factor, a specific DNA-binding protein that functions in genetic recombination as well as in transcriptional and translational control. The sequence is that of Integration host factor subunit alpha from Methylorubrum populi (strain ATCC BAA-705 / NCIMB 13946 / BJ001) (Methylobacterium populi).